The chain runs to 345 residues: Lysine-specific demethylase JMJ32 (345 aa).

The region spanning 122–315 is the JmjC domain; sequence GYLQQQNDCF…IKYAYFNFLQ (194 aa). Residues His174, Asp176, and His281 each coordinate Fe cation.

Belongs to the JARID1 histone demethylase family. The cofactor is Fe(2+). As to expression, expressed ubiquitously including in vasculatures, leaves, siliques, roots and inflorescences. Present in the root meristem. Accumulates in cotyledons and root tips of young seedlings.

The protein localises to the nucleus. It localises to the cytoplasm. Its subcellular location is the endoplasmic reticulum. It catalyses the reaction N(6),N(6),N(6)-trimethyl-L-lysyl(27)-[histone H3] + 2-oxoglutarate + O2 = N(6),N(6)-dimethyl-L-lysyl(27)-[histone H3] + formaldehyde + succinate + CO2. It carries out the reaction N(6),N(6)-dimethyl-L-lysyl(27)-[histone H3] + 2-oxoglutarate + O2 = N(6)-methyl-L-lysyl(27)-[histone H3] + formaldehyde + succinate + CO2. The enzyme catalyses N(6),N(6),N(6)-trimethyl-L-lysyl(27)-[histone H3] + 2 2-oxoglutarate + 2 O2 = N(6)-methyl-L-lysyl(27)-[histone H3] + 2 formaldehyde + 2 succinate + 2 CO2. Functionally, histone demethylase that demethylates 'Lys-27' (H3K27me) of histone H3 with a specific activity for H3K27me3 and H3K27me2, and involved in the regulation of gene expression. No activity on H3K27me1. Together with JMJ30, regulates the flowering-repressor FLOWERING LOCUS C (FLC) locus by removing the repressive histone modification H3 lysine 27 trimethylation (H3K27me3), especially at elevated temperatures (e.g. 29 degrees Celsius), thus preventing extreme precocious flowering. JMJ30 and JMJ32 are regulators involved in the integration of abscisic acid (ABA) and brassinosteroids (BR) signaling pathways. Together with JMJ30, controls ABA-mediated growth arrest during the post-germination stage in unfavorable conditions, and responses to ABA during root development, via the removal of repressive histone mark (H3K27me3) from the SnRK2.8 promoter, thus promoting SnRK2.8 expression and subsequent kinase-dependent ABI3 activation. In addition, removes the repressive histone marks (H3K27me3) from the BZR1 locus in response to stress and ABA, thus activating the BR signaling pathway which, in turn, inhibits the ABA signaling pathway. In Arabidopsis thaliana (Mouse-ear cress), this protein is Lysine-specific demethylase JMJ32.